The chain runs to 567 residues: Probable serine/threonine-protein kinase WNK6 (567 aa).

Residues 28-285 (IRYKEVIGKG…AKELLLDPFL (258 aa)) form the Protein kinase domain. ATP-binding positions include 108 to 111 (TELF) and K158. D175 (proton acceptor) is an active-site residue. The segment covering 499–509 (VDATKGEDKSS) has biased composition (basic and acidic residues). The interval 499–528 (VDATKGEDKSSIQEVEEATEPVSLEEEERL) is disordered. Positions 512–525 (EVEEATEPVSLEEE) are enriched in acidic residues. Residues 519–553 (PVSLEEEERLRQELEEIEAKYQEDMKEIATKREEA) are a coiled coil.

The protein belongs to the protein kinase superfamily. Ser/Thr protein kinase family. WNK subfamily.

It catalyses the reaction L-seryl-[protein] + ATP = O-phospho-L-seryl-[protein] + ADP + H(+). It carries out the reaction L-threonyl-[protein] + ATP = O-phospho-L-threonyl-[protein] + ADP + H(+). Its function is as follows. May regulate flowering time by modulating the photoperiod pathway. The sequence is that of Probable serine/threonine-protein kinase WNK6 (WNK6) from Arabidopsis thaliana (Mouse-ear cress).